The sequence spans 408 residues: Arginine biosynthesis bifunctional protein ArgJ (408 aa).

Substrate contacts are provided by T158, K184, T195, E281, N403, and T408. The active-site Nucleophile is T195.

It belongs to the ArgJ family. Heterotetramer of two alpha and two beta chains.

It localises to the cytoplasm. The enzyme catalyses N(2)-acetyl-L-ornithine + L-glutamate = N-acetyl-L-glutamate + L-ornithine. It catalyses the reaction L-glutamate + acetyl-CoA = N-acetyl-L-glutamate + CoA + H(+). It functions in the pathway amino-acid biosynthesis; L-arginine biosynthesis; L-ornithine and N-acetyl-L-glutamate from L-glutamate and N(2)-acetyl-L-ornithine (cyclic): step 1/1. It participates in amino-acid biosynthesis; L-arginine biosynthesis; N(2)-acetyl-L-ornithine from L-glutamate: step 1/4. Functionally, catalyzes two activities which are involved in the cyclic version of arginine biosynthesis: the synthesis of N-acetylglutamate from glutamate and acetyl-CoA as the acetyl donor, and of ornithine by transacetylation between N(2)-acetylornithine and glutamate. This is Arginine biosynthesis bifunctional protein ArgJ from Shouchella clausii (strain KSM-K16) (Alkalihalobacillus clausii).